The chain runs to 380 residues: Queuine tRNA-ribosyltransferase (380 aa).

The active-site Proton acceptor is the Asp96. Substrate-binding positions include 96–100 (DSGGF), Asp150, Gln193, and Gly220. Residues 251–257 (GVGAPDS) form an RNA binding region. Asp270 (nucleophile) is an active-site residue. Residues 275 to 279 (TRIAR) form an RNA binding; important for wobble base 34 recognition region. The Zn(2+) site is built by Cys308, Cys310, Cys313, and His339.

The protein belongs to the queuine tRNA-ribosyltransferase family. As to quaternary structure, homodimer. Within each dimer, one monomer is responsible for RNA recognition and catalysis, while the other monomer binds to the replacement base PreQ1. It depends on Zn(2+) as a cofactor.

The enzyme catalyses 7-aminomethyl-7-carbaguanine + guanosine(34) in tRNA = 7-aminomethyl-7-carbaguanosine(34) in tRNA + guanine. It participates in tRNA modification; tRNA-queuosine biosynthesis. In terms of biological role, catalyzes the base-exchange of a guanine (G) residue with the queuine precursor 7-aminomethyl-7-deazaguanine (PreQ1) at position 34 (anticodon wobble position) in tRNAs with GU(N) anticodons (tRNA-Asp, -Asn, -His and -Tyr). Catalysis occurs through a double-displacement mechanism. The nucleophile active site attacks the C1' of nucleotide 34 to detach the guanine base from the RNA, forming a covalent enzyme-RNA intermediate. The proton acceptor active site deprotonates the incoming PreQ1, allowing a nucleophilic attack on the C1' of the ribose to form the product. After dissociation, two additional enzymatic reactions on the tRNA convert PreQ1 to queuine (Q), resulting in the hypermodified nucleoside queuosine (7-(((4,5-cis-dihydroxy-2-cyclopenten-1-yl)amino)methyl)-7-deazaguanosine). The sequence is that of Queuine tRNA-ribosyltransferase from Streptococcus sanguinis (strain SK36).